A 535-amino-acid polypeptide reads, in one-letter code: Phosphoenolpyruvate carboxykinase (ATP) (535 aa).

Residues Arg59, Tyr201, and Lys207 each contribute to the substrate site. ATP is bound by residues Lys207, His226, and Gly243–Thr251. Mn(2+) is bound by residues Lys207 and His226. Asp264 contacts Mn(2+). ATP-binding positions include Glu292, Arg328, Arg444–Ile445, and Thr450. A substrate-binding site is contributed by Arg328.

This sequence belongs to the phosphoenolpyruvate carboxykinase (ATP) family. It depends on Mn(2+) as a cofactor.

It localises to the cytoplasm. It carries out the reaction oxaloacetate + ATP = phosphoenolpyruvate + ADP + CO2. It participates in carbohydrate biosynthesis; gluconeogenesis. Functionally, involved in the gluconeogenesis. Catalyzes the conversion of oxaloacetate (OAA) to phosphoenolpyruvate (PEP) through direct phosphoryl transfer between the nucleoside triphosphate and OAA. The protein is Phosphoenolpyruvate carboxykinase (ATP) of Bacteroides fragilis (strain ATCC 25285 / DSM 2151 / CCUG 4856 / JCM 11019 / LMG 10263 / NCTC 9343 / Onslow / VPI 2553 / EN-2).